The sequence spans 549 residues: Cytoplasmic trehalase (549 aa).

Residues R168, 175–176, N212, 221–223, 292–294, and G324 each bind substrate; these read WD, RSQ, and RDE. Residues D326 and E509 each act as proton donor/acceptor in the active site. E525 contributes to the substrate binding site.

This sequence belongs to the glycosyl hydrolase 37 family. As to quaternary structure, monomer.

The protein localises to the cytoplasm. It catalyses the reaction alpha,alpha-trehalose + H2O = alpha-D-glucose + beta-D-glucose. Its pathway is glycan degradation; trehalose degradation; D-glucose from alpha,alpha-trehalose: step 1/1. Its function is as follows. Hydrolyzes trehalose to glucose. Could be involved, in cells returning to low osmolarity conditions, in the utilization of the accumulated cytoplasmic trehalose, which was synthesized in response to high osmolarity. The sequence is that of Cytoplasmic trehalase from Shigella flexneri serotype 5b (strain 8401).